Consider the following 598-residue polypeptide: Chaperone protein DnaK (598 aa).

Thr180 carries the post-translational modification Phosphothreonine; by autocatalysis.

The protein belongs to the heat shock protein 70 family.

Functionally, acts as a chaperone. The protein is Chaperone protein DnaK of Thermosipho africanus (strain TCF52B).